A 140-amino-acid polypeptide reads, in one-letter code: Smith-Magenis syndrome chromosomal region candidate gene 5 protein (140 aa).

Positions 43-77 (CTGPSSQAPPQPPQASPPAAADHSRTPSLLASSHS) are disordered. The segment covering 49–58 (QAPPQPPQAS) has biased composition (pro residues).

In terms of tissue distribution, widely expressed.

The sequence is that of Smith-Magenis syndrome chromosomal region candidate gene 5 protein (SMCR5) from Homo sapiens (Human).